Consider the following 432-residue polypeptide: Enolase (432 aa).

Residue Q167 coordinates (2R)-2-phosphoglycerate. The active-site Proton donor is E209. Mg(2+) contacts are provided by D246, E290, and D317. (2R)-2-phosphoglycerate contacts are provided by K342, R371, S372, and K393. The Proton acceptor role is filled by K342.

It belongs to the enolase family. As to quaternary structure, component of the RNA degradosome, a multiprotein complex involved in RNA processing and mRNA degradation. Requires Mg(2+) as cofactor.

It localises to the cytoplasm. It is found in the secreted. Its subcellular location is the cell surface. It catalyses the reaction (2R)-2-phosphoglycerate = phosphoenolpyruvate + H2O. It functions in the pathway carbohydrate degradation; glycolysis; pyruvate from D-glyceraldehyde 3-phosphate: step 4/5. Its function is as follows. Catalyzes the reversible conversion of 2-phosphoglycerate (2-PG) into phosphoenolpyruvate (PEP). It is essential for the degradation of carbohydrates via glycolysis. This Salmonella agona (strain SL483) protein is Enolase.